Here is a 935-residue protein sequence, read N- to C-terminus: Coatomer subunit gamma (935 aa).

5 HEAT repeats span residues 258-296 (PQLF…RNSR), 337-372 (PEKI…TGTS), 373-410 (KNIS…NFPQ), 412-449 (WKSI…FVPQ), and 524-562 (PTLY…ARNK). Residues 630–656 (KSETTLDTTPEAESVPEKRADANSFAG) are disordered. Position 638 is a phosphothreonine (threonine 638). Serine 643 is subject to Phosphoserine. Lysine 647 participates in a covalent cross-link: Glycyl lysine isopeptide (Lys-Gly) (interchain with G-Cter in ubiquitin). At serine 653 the chain carries Phosphoserine.

It belongs to the COPG family. In terms of assembly, oligomeric complex that consists of at least the alpha, beta, beta', gamma, delta, epsilon and zeta subunits. Interacts (via C-terminus) with GEA1 (via N-terminal region) and KEI1 (via C-terminal region).

It is found in the cytoplasm. The protein resides in the golgi apparatus membrane. Its subcellular location is the cytoplasmic vesicle. It localises to the COPI-coated vesicle membrane. The protein localises to the endosome. Its function is as follows. The coatomer is a cytosolic protein complex that binds to dilysine motifs and reversibly associates with Golgi non-clathrin-coated vesicles, which further mediate biosynthetic protein transport from the ER, via the Golgi up to the trans Golgi network. Coatomer complex is required for budding from Golgi membranes, and is essential for the retrograde Golgi-to-ER transport of dilysine-tagged proteins. The protein is Coatomer subunit gamma (SEC21) of Saccharomyces cerevisiae (strain ATCC 204508 / S288c) (Baker's yeast).